The sequence spans 261 residues: Antiviral protein S (261 aa).

Cystine bridges form between cysteine 34/cysteine 258 and cysteine 84/cysteine 105. Glutamate 175 is a catalytic residue.

The protein belongs to the ribosome-inactivating protein family. Type 1 RIP subfamily.

It carries out the reaction Endohydrolysis of the N-glycosidic bond at one specific adenosine on the 28S rRNA.. In terms of biological role, inhibits viral infection of plants, and protein synthesis in vitro. The protein is Antiviral protein S of Phytolacca americana (American pokeweed).